The primary structure comprises 256 residues: 6-phosphogluconolactonase (256 aa).

This sequence belongs to the glucosamine/galactosamine-6-phosphate isomerase family. 6-phosphogluconolactonase subfamily.

It catalyses the reaction 6-phospho-D-glucono-1,5-lactone + H2O = 6-phospho-D-gluconate + H(+). Its pathway is carbohydrate degradation; pentose phosphate pathway; D-ribulose 5-phosphate from D-glucose 6-phosphate (oxidative stage): step 2/3. Functionally, hydrolysis of 6-phosphogluconolactone to 6-phosphogluconate. The chain is 6-phosphogluconolactonase (pgl) from Chlamydia trachomatis serovar D (strain ATCC VR-885 / DSM 19411 / UW-3/Cx).